The primary structure comprises 264 residues: Glutamate racemase (264 aa).

Residues 10-11 and 42-43 each bind substrate; these read DS and YG. Cys73 (proton donor/acceptor) is an active-site residue. Residue 74–75 participates in substrate binding; it reads NT. The active-site Proton donor/acceptor is the Cys183. 184–185 provides a ligand contact to substrate; that stretch reads TH.

This sequence belongs to the aspartate/glutamate racemases family.

The enzyme catalyses L-glutamate = D-glutamate. Its pathway is cell wall biogenesis; peptidoglycan biosynthesis. Its function is as follows. Provides the (R)-glutamate required for cell wall biosynthesis. This is Glutamate racemase from Streptococcus pyogenes serotype M2 (strain MGAS10270).